Here is a 168-residue protein sequence, read N- to C-terminus: Crossover junction endodeoxyribonuclease RuvC (168 aa).

Residues D10, E70, and D143 contribute to the active site. Mg(2+) contacts are provided by D10, E70, and D143.

It belongs to the RuvC family. In terms of assembly, homodimer which binds Holliday junction (HJ) DNA. The HJ becomes 2-fold symmetrical on binding to RuvC with unstacked arms; it has a different conformation from HJ DNA in complex with RuvA. In the full resolvosome a probable DNA-RuvA(4)-RuvB(12)-RuvC(2) complex forms which resolves the HJ. Requires Mg(2+) as cofactor.

The protein localises to the cytoplasm. The catalysed reaction is Endonucleolytic cleavage at a junction such as a reciprocal single-stranded crossover between two homologous DNA duplexes (Holliday junction).. Functionally, the RuvA-RuvB-RuvC complex processes Holliday junction (HJ) DNA during genetic recombination and DNA repair. Endonuclease that resolves HJ intermediates. Cleaves cruciform DNA by making single-stranded nicks across the HJ at symmetrical positions within the homologous arms, yielding a 5'-phosphate and a 3'-hydroxyl group; requires a central core of homology in the junction. The consensus cleavage sequence is 5'-(A/T)TT(C/G)-3'. Cleavage occurs on the 3'-side of the TT dinucleotide at the point of strand exchange. HJ branch migration catalyzed by RuvA-RuvB allows RuvC to scan DNA until it finds its consensus sequence, where it cleaves and resolves the cruciform DNA. The protein is Crossover junction endodeoxyribonuclease RuvC of Thermotoga maritima (strain ATCC 43589 / DSM 3109 / JCM 10099 / NBRC 100826 / MSB8).